Here is a 259-residue protein sequence, read N- to C-terminus: 2-oxoglutaramate amidase (259 aa).

Positions W3–L238 constitute a CN hydrolase domain. Catalysis depends on E42, which acts as the Proton acceptor. K111 serves as the catalytic Proton donor. C145 (nucleophile) is an active-site residue.

The protein belongs to the carbon-nitrogen hydrolase superfamily. NIT1/NIT2 family.

It carries out the reaction 2-oxoglutaramate + H2O = 2-oxoglutarate + NH4(+). Its function is as follows. Involved in the methylthioribose (MTR) recycling pathway. Probably catalyzes the conversion of 2-oxoglutaramate to 2-oxoglutarate. The protein is 2-oxoglutaramate amidase of Bacillus subtilis (strain 168).